Here is a 506-residue protein sequence, read N- to C-terminus: Kynurenine 3-monooxygenase (506 aa).

The tract at residues 153-174 is disordered; that stretch reads QETSLLPGEESEKDKKQNTEDE. A compositionally biased stretch (basic and acidic residues) spans 162-171; sequence ESEKDKKQNT.

This sequence belongs to the aromatic-ring hydroxylase family. KMO subfamily. Requires FAD as cofactor.

It is found in the mitochondrion outer membrane. The enzyme catalyses L-kynurenine + NADPH + O2 + H(+) = 3-hydroxy-L-kynurenine + NADP(+) + H2O. The protein operates within cofactor biosynthesis; NAD(+) biosynthesis; quinolinate from L-kynurenine: step 1/3. Catalyzes the hydroxylation of L-kynurenine (L-Kyn) to form 3-hydroxy-L-kynurenine (L-3OHKyn). Required for synthesis of quinolinic acid. The chain is Kynurenine 3-monooxygenase from Cryptococcus neoformans var. neoformans serotype D (strain JEC21 / ATCC MYA-565) (Filobasidiella neoformans).